The primary structure comprises 296 residues: Sperm-activating peptides (296 aa).

3 consecutive propeptides follow at residues 1–134 (MPPG…MYKK), 146–190 (MLSN…MILK), and 290–296 (EVEIKDW).

Causes stimulation of sperm respiration and motility through intracellular alkalinization, transient elevations of cAMP, cGMP and calcium levels in sperm cells, and transient activation and subsequent inactivation of the membrane form of guanylate cyclase. The protein is Sperm-activating peptides of Strongylocentrotus purpuratus (Purple sea urchin).